A 142-amino-acid chain; its full sequence is Ribosome maturation factor RimP (142 aa).

It belongs to the RimP family.

It is found in the cytoplasm. In terms of biological role, required for maturation of 30S ribosomal subunits. This Nitratiruptor sp. (strain SB155-2) protein is Ribosome maturation factor RimP.